The primary structure comprises 258 residues: 6-carboxyhexanoate--CoA ligase (258 aa).

The protein belongs to the BioW family. Homodimer. The cofactor is Mg(2+).

It catalyses the reaction heptanedioate + ATP + CoA = 6-carboxyhexanoyl-CoA + AMP + diphosphate. Its pathway is metabolic intermediate metabolism; pimeloyl-CoA biosynthesis; pimeloyl-CoA from pimelate: step 1/1. Its function is as follows. Catalyzes the transformation of pimelate into pimeloyl-CoA with concomitant hydrolysis of ATP to AMP. The chain is 6-carboxyhexanoate--CoA ligase from Bacillus subtilis (strain BSn5).